Here is a 218-residue protein sequence, read N- to C-terminus: Cytochrome b6 (218 aa).

A helical membrane pass occupies residues 35–55 (IFYCLGGITLVCFLIQFATGF). Residue Cys-38 participates in heme c binding. His-89 and His-103 together coordinate heme b. The next 3 membrane-spanning stretches (helical) occupy residues 93–113 (ASMMVLMLILHVFRVYLTGGF), 119–139 (LTWVTGVTMAVITVSFGVTGY), and 189–209 (LHTFVMPWLLAVFMLMHFLMI). Heme b contacts are provided by His-190 and His-205.

This sequence belongs to the cytochrome b family. PetB subfamily. As to quaternary structure, the 4 large subunits of the cytochrome b6-f complex are cytochrome b6, subunit IV (17 kDa polypeptide, PetD), cytochrome f and the Rieske protein, while the 4 small subunits are PetG, PetL, PetM and PetN. The complex functions as a dimer. Heme b serves as cofactor. Heme c is required as a cofactor.

It localises to the cellular thylakoid membrane. Its function is as follows. Component of the cytochrome b6-f complex, which mediates electron transfer between photosystem II (PSII) and photosystem I (PSI), cyclic electron flow around PSI, and state transitions. The polypeptide is Cytochrome b6 (Parasynechococcus marenigrum (strain WH8102)).